The chain runs to 335 residues: MKISRSLSTVEVHTGGEAFRIVTSGLPRLPGDTIVQRRAWLKAHADEIRRALMFEPRGHADMYGGYLTEPVSPNADFGVIFVHNEGYSDHCGHGVIALSTAAVELGWVQRTVPETRVGIDAPCGFIEAFVQWDGEHAGPVRFVNVPSFIWRRDVSVDTPSFGTVTGDIAYGGAFYFYVDGAPFDLPVRESAVEKLIRFGAEVKAAANATYPVVHPEIPEINHIYGTIIANAPRHAGSTQANCCVFADREVDRSPTGSGTGGRVAQLYQRGLLAAGDTLVNESIVGTVFKGRVLRETTVGDFPAVIPEVEGSAHICGFANWIVDERDPLTYGFLVR.

The active-site Proton acceptor is Cys-91. Substrate contacts are provided by residues 92–93, His-222, and 256–257; these read GH and GS.

The protein belongs to the proline racemase family. In terms of assembly, homodimer.

The enzyme catalyses trans-3-hydroxy-L-proline = 1-pyrroline-2-carboxylate + H2O. Functionally, catalyzes the dehydration of trans-3-hydroxy-L-proline (t3LHyp) to Delta(1)-pyrroline-2-carboxylate (Pyr2C). Does not possess neither proline racemase nor 4-hydroxyproline 2-epimerase activities. The polypeptide is Trans-3-hydroxy-L-proline dehydratase (Burkholderia cenocepacia (strain HI2424)).